The primary structure comprises 156 residues: Putative pre-16S rRNA nuclease (156 aa).

The protein belongs to the YqgF nuclease family.

It is found in the cytoplasm. Its function is as follows. Could be a nuclease involved in processing of the 5'-end of pre-16S rRNA. The sequence is that of Putative pre-16S rRNA nuclease from Albidiferax ferrireducens (strain ATCC BAA-621 / DSM 15236 / T118) (Rhodoferax ferrireducens).